A 198-amino-acid polypeptide reads, in one-letter code: Zinc finger protein 41 homolog (198 aa).

Positions 1 to 12 (MEKPAGRKKKTP) are enriched in basic residues. The interval 1-55 (MEKPAGRKKKTPTPREEADVQKSALREEKVSGDRKPPERPTVPRKPRTEPCLSPE) is disordered. The span at 13 to 38 (TPREEADVQKSALREEKVSGDRKPPE) shows a compositional bias: basic and acidic residues. C2H2-type zinc fingers lie at residues 87 to 109 (YECS…QRVH), 115 to 137 (FKCA…QRTH), 143 to 165 (FKCG…QKTH), and 171 to 193 (YECT…QKRH).

This sequence belongs to the krueppel C2H2-type zinc-finger protein family.

It is found in the nucleus. Its function is as follows. A putative DNA-binding regulatory protein associated with meiosis in spermatogenesis. The polypeptide is Zinc finger protein 41 homolog (ZFP41) (Homo sapiens (Human)).